A 212-amino-acid polypeptide reads, in one-letter code: uncharacterized protein (212 aa).

The S-adenosyl-L-methionine site is built by glycine 53, glutamate 74, and aspartate 96.

Belongs to the methyltransferase superfamily. YrrT family.

Its function is as follows. Could be a S-adenosyl-L-methionine-dependent methyltransferase. This is an uncharacterized protein from Anoxybacillus flavithermus (strain DSM 21510 / WK1).